Here is a 282-residue protein sequence, read N- to C-terminus: Bifunctional protein FolD (282 aa).

NADP(+) contacts are provided by residues 165–167 and Ile-231; that span reads GAS.

The protein belongs to the tetrahydrofolate dehydrogenase/cyclohydrolase family. In terms of assembly, homodimer.

The catalysed reaction is (6R)-5,10-methylene-5,6,7,8-tetrahydrofolate + NADP(+) = (6R)-5,10-methenyltetrahydrofolate + NADPH. It carries out the reaction (6R)-5,10-methenyltetrahydrofolate + H2O = (6R)-10-formyltetrahydrofolate + H(+). Its pathway is one-carbon metabolism; tetrahydrofolate interconversion. Functionally, catalyzes the oxidation of 5,10-methylenetetrahydrofolate to 5,10-methenyltetrahydrofolate and then the hydrolysis of 5,10-methenyltetrahydrofolate to 10-formyltetrahydrofolate. This Francisella tularensis subsp. holarctica (strain FTNF002-00 / FTA) protein is Bifunctional protein FolD.